Reading from the N-terminus, the 161-residue chain is Ubiquitin D (161 aa).

Ubiquitin-like domains are found at residues 3-77 and 86-159; these read SCVC…LKVV and LSLV…AHCI.

This sequence belongs to the ubiquitin D family. As to quaternary structure, interacts directly with the 26S proteasome. Interacts with NUB1; this interaction facilitates the linking of UBD-conjugated target protein to the proteasome complex and accelerates its own degradation and that of its conjugates. Interacts (via ubiquitin-like 1 domain) with the spindle checkpoint protein MAD2L1 during mitosis. Present in aggresomes of proteasome inhibited cells. Interacts with HDAC6 under proteasome impairment conditions. Forms a thioester with UBA6 in cells stimulated with tumor necrosis factor-alpha (TNFa) and interferon-gamma (IFNg). Interacts with SQSTM1 and TP53/p53. Post-translationally, can be acetylated.

The protein localises to the nucleus. The protein resides in the cytoplasm. Functionally, ubiquitin-like protein modifier which can be covalently attached to target proteins and subsequently leads to their degradation by the 26S proteasome, in a NUB1-dependent manner. Conjugation to the target protein is activated by UBA6 via adenylation of its C-terminal glycine. Probably functions as a survival factor. Promotes the expression of the proteasome subunit beta type-9 (PSMB9/LMP2). Regulates TNF-alpha-induced and LPS-mediated activation of the central mediator of innate immunity NF-kappa-B by promoting TNF-alpha-mediated proteasomal degradation of ubiquitinated-I-kappa-B-alpha. Required for TNF-alpha-induced p65 nuclear translocation in renal tubular epithelial cells (RTECs). May be involved in dendritic cell (DC) maturation, the process by which immature dendritic cells differentiate into fully competent antigen-presenting cells that initiate T-cell responses. Mediates mitotic non-disjunction and chromosome instability, in long-term in vitro culture and cancers, by abbreviating mitotic phase and impairing the kinetochore localization of MAD2L1 during the prometaphase stage of the cell cycle. May be involved in the formation of aggresomes when proteasome is saturated or impaired. Mediates apoptosis in a caspase-dependent manner, especially in renal epithelium and tubular cells during renal diseases. The protein is Ubiquitin D (Ubd) of Rattus norvegicus (Rat).